Here is a 505-residue protein sequence, read N- to C-terminus: 2,3-bisphosphoglycerate-independent phosphoglycerate mutase (505 aa).

Mn(2+) is bound by residues Asp12 and Ser62. Ser62 functions as the Phosphoserine intermediate in the catalytic mechanism. Substrate contacts are provided by residues His123, 153–154 (RD), Arg185, Arg191, 257–260 (RPDR), and Lys330. Mn(2+) is bound by residues Asp397, His401, Asp438, His439, and His456.

Belongs to the BPG-independent phosphoglycerate mutase family. In terms of assembly, monomer. Requires Mn(2+) as cofactor.

The catalysed reaction is (2R)-2-phosphoglycerate = (2R)-3-phosphoglycerate. It functions in the pathway carbohydrate degradation; glycolysis; pyruvate from D-glyceraldehyde 3-phosphate: step 3/5. In terms of biological role, catalyzes the interconversion of 2-phosphoglycerate and 3-phosphoglycerate. The chain is 2,3-bisphosphoglycerate-independent phosphoglycerate mutase from Staphylococcus aureus (strain COL).